The chain runs to 466 residues: Voltage-gated potassium channel regulatory subunit KCNG2 (466 aa).

Residues 1–174 (MEPWPCSPGG…DVVDNPHSGL (174 aa)) are Cytoplasmic-facing. The segment at 131 to 155 (AEARAGPTERGAQGSPARALGPRGR) is disordered. The chain crosses the membrane as a helical span at residues 175-196 (AGKLFACVSVSFVAVTAVGLCL). At 197–217 (STMPDIRAEEERGECSPKCRS) the chain is on the extracellular side. Residues 218–239 (LFVLETVCVAWFSFEFLLRSLQ) traverse the membrane as a helical segment. Topologically, residues 240–250 (AESKCAFLRAP) are cytoplasmic. Residues 251 to 271 (LNIIDILALLPFYVSLLLGLA) traverse the membrane as a helical segment. The Extracellular segment spans residues 272–283 (AGPGGTKLLERA). Residues 284–304 (GLVLRLLRALRVLYVMRLARH) traverse the membrane as a helical; Voltage-sensor segment. Residues 305–319 (SLGLRSLGLTMRRCA) lie on the Cytoplasmic side of the membrane. A helical membrane pass occupies residues 320–341 (REFGLLLLFLCVAMALFAPLVH). Over 342-356 (LAERELGARRDFSSV) the chain is Extracellular. An intramembrane region (helical) is located at residues 357 to 368 (PASYWWAVISMT). Positions 369 to 374 (TVGYGD) match the Selectivity filter motif. Residues 369–376 (TVGYGDMV) lie within the membrane without spanning it. Over 377–383 (PRSLPGQ) the chain is Extracellular. The helical transmembrane segment at 384–412 (VVALSSILSGILLMAFPVTSIFHTFSRSY) threads the bilayer. Topologically, residues 413-466 (SELKEQQQRAASPEPALQEDSTHSATATEDSSQGPDSAGLADDSADALWVRAGR) are cytoplasmic. A disordered region spans residues 416 to 466 (KEQQQRAASPEPALQEDSTHSATATEDSSQGPDSAGLADDSADALWVRAGR). The segment covering 435-447 (HSATATEDSSQGP) has biased composition (polar residues). Residues 448–460 (DSAGLADDSADAL) are compositionally biased toward low complexity.

It belongs to the potassium channel family. G (TC 1.A.1.2) subfamily. Kv6.2/KCNG2 sub-subfamily. In terms of assembly, heterodimer with KCNB1. In terms of tissue distribution, highly expressed in heart, liver, skeletal muscle, kidney and pancreas. Detected at low levels in brain, lung and placenta.

The protein resides in the cell membrane. Regulatory alpha-subunit of the voltage-gated potassium (Kv) channel which, when coassembled with KCNB1, can modulate the kinetics and conductance-voltage relationship. Modulates channel activity by shifting the threshold and the half-maximal activation to more negative values. Potassium channel subunit that does not form functional channels by itself. The sequence is that of Voltage-gated potassium channel regulatory subunit KCNG2 from Homo sapiens (Human).